The primary structure comprises 172 residues: Shikimate kinase (172 aa).

An ATP-binding site is contributed by 14–19; sequence GAGKST. S18 lines the Mg(2+) pocket. 3 residues coordinate substrate: D36, R60, and G82. R120 is a binding site for ATP. Residue R140 coordinates substrate. Q157 serves as a coordination point for ATP.

It belongs to the shikimate kinase family. As to quaternary structure, monomer. Requires Mg(2+) as cofactor.

It localises to the cytoplasm. The enzyme catalyses shikimate + ATP = 3-phosphoshikimate + ADP + H(+). It participates in metabolic intermediate biosynthesis; chorismate biosynthesis; chorismate from D-erythrose 4-phosphate and phosphoenolpyruvate: step 5/7. Functionally, catalyzes the specific phosphorylation of the 3-hydroxyl group of shikimic acid using ATP as a cosubstrate. In Colwellia psychrerythraea (strain 34H / ATCC BAA-681) (Vibrio psychroerythus), this protein is Shikimate kinase.